The following is a 207-amino-acid chain: Small ribosomal subunit protein uS4 (207 aa).

The segment at 32–55 is disordered; the sequence is CKLDSKPGQHGRTSGARTSDYGTQ. A compositionally biased stretch (polar residues) spans 42–53; the sequence is GRTSGARTSDYG. The 62-residue stretch at 97 to 158 folds into the S4 RNA-binding domain; it reads SRLDNVVYRM…TKKKQARILE (62 aa).

Belongs to the universal ribosomal protein uS4 family. Part of the 30S ribosomal subunit. Contacts protein S5. The interaction surface between S4 and S5 is involved in control of translational fidelity.

Its function is as follows. One of the primary rRNA binding proteins, it binds directly to 16S rRNA where it nucleates assembly of the body of the 30S subunit. In terms of biological role, with S5 and S12 plays an important role in translational accuracy. In Paraburkholderia phytofirmans (strain DSM 17436 / LMG 22146 / PsJN) (Burkholderia phytofirmans), this protein is Small ribosomal subunit protein uS4.